A 64-amino-acid polypeptide reads, in one-letter code: Large ribosomal subunit protein bL33 (64 aa).

This sequence belongs to the bacterial ribosomal protein bL33 family.

This is Large ribosomal subunit protein bL33 from Thermosynechococcus vestitus (strain NIES-2133 / IAM M-273 / BP-1).